The following is a 117-amino-acid chain: Large ribosomal subunit protein bL19 (117 aa).

It belongs to the bacterial ribosomal protein bL19 family.

Functionally, this protein is located at the 30S-50S ribosomal subunit interface and may play a role in the structure and function of the aminoacyl-tRNA binding site. The chain is Large ribosomal subunit protein bL19 from Aliivibrio fischeri (strain ATCC 700601 / ES114) (Vibrio fischeri).